Here is a 316-residue protein sequence, read N- to C-terminus: Cell division protein ZipA (316 aa).

Over 1–5 (MQELR) the chain is Periplasmic. A helical transmembrane segment spans residues 6 to 26 (FVLIVVGALAIAALLFHGLWS). The Cytoplasmic portion of the chain corresponds to 27–316 (SKKEGKAKFG…QIVEFNAANA (290 aa)). Residues 36 to 65 (GNKPLGKLDVDQGDKDSVEQERSFAPATED) are disordered. Residues 41-57 (GKLDVDQGDKDSVEQER) show a composition bias toward basic and acidic residues.

The protein belongs to the ZipA family. Interacts with FtsZ via their C-terminal domains.

Its subcellular location is the cell inner membrane. Essential cell division protein that stabilizes the FtsZ protofilaments by cross-linking them and that serves as a cytoplasmic membrane anchor for the Z ring. Also required for the recruitment to the septal ring of downstream cell division proteins. This Vibrio parahaemolyticus serotype O3:K6 (strain RIMD 2210633) protein is Cell division protein ZipA.